The sequence spans 247 residues: 14-3-3 protein gamma (247 aa).

N-acetylmethionine; in 14-3-3 protein gamma; alternate; partial is present on methionine 1. An N-acetylvaline; in 14-3-3 protein gamma, N-terminally processed; partial modification is found at valine 2. Residue valine 2 is modified to N-acetylvaline; partial. Positions valine 2–glutamine 166 are required for interaction with SPATA18/MIEAP (isoform 2) but dispensable for binding to SPATA18/MIEAP (isoform 1). The segment at valine 2 to asparagine 247 is interaction with SPATA18/MIEAP. Serine 71 carries the phosphoserine modification. Tyrosine 133 carries the post-translational modification Phosphotyrosine. Residue threonine 145 is modified to Phosphothreonine. Residue serine 215 is modified to Phosphoserine. Threonine 234 is subject to Phosphothreonine. Residue serine 235 is modified to Phosphoserine.

Belongs to the 14-3-3 family. As to quaternary structure, homodimer. Part of a complex that contains DSG3, PKP1, YAP1 and YWHAG; the complex is required for localization of DSG3 and YAP1 to the cell membrane in keratinocytes. Interacts with SAMSN1. Interacts with RAF1, SSH1 and CRTC2/TORC2. Interacts with ABL1 (phosphorylated form); the interaction retains it in the cytoplasm. Interacts with GAB2. Interacts with MDM4 (phosphorylated); negatively regulates MDM4 activity toward TP53. Interacts with PKA-phosphorylated AANAT and SIRT2. Interacts with the 'Thr-369' phosphorylated form of DAPK2. Interacts with PI4KB, TBC1D22A and TBC1D22B. Interacts with SLITRK1. Interacts with LRRK2; this interaction is dependent on LRRK2 phosphorylation. Interacts with MARK2 and MARK3. Interacts with MEFV. Interacts with ENDOG, TSC2 and PIK3C3; interaction with ENDOG weakens its interaction with TSC2 and PIK3C3. Interacts with (phosphorylated) WDR24. Interacts with BEST1; this interaction promotes L-glutamate channel activity leading to the positive regulation of NMDA glutamate receptor activity through the L-glutamate secretion. Interacts with PKP1 (when phosphorylated); the interaction results in translocation of PKP1 to the cytoplasm and loss of intercellular adhesion in keratinocytes. Interacts with SPATA18/MIEAP (isoforms 1 and 2); a protein that also plays a role in MALM. In terms of processing, phosphorylated by various PKC isozymes. Highly expressed in brain, skeletal muscle, and heart.

The protein resides in the cytoplasm. It localises to the cytosol. It is found in the mitochondrion matrix. In terms of biological role, adapter protein implicated in the regulation of a large spectrum of both general and specialized signaling pathways. Binds to a large number of partners, usually by recognition of a phosphoserine or phosphothreonine motif. Binding generally results in the modulation of the activity of the binding partner. Promotes inactivation of WDR24 component of the GATOR2 complex by binding to phosphorylated WDR24. Participates in the positive regulation of NMDA glutamate receptor activity by promoting the L-glutamate secretion through interaction with BEST1. Reduces keratinocyte intercellular adhesion, via interacting with PKP1 and sequestering it in the cytoplasm, thereby reducing its incorporation into desmosomes. Plays a role in mitochondrial protein catabolic process (also named MALM) that promotes the degradation of damaged proteins inside mitochondria. This is 14-3-3 protein gamma from Homo sapiens (Human).